A 444-amino-acid chain; its full sequence is Ubiquitin carboxyl-terminal hydrolase MINDY-3 (444 aa).

The active-site Nucleophile is the cysteine 51. Residue serine 124 is modified to Phosphoserine. Histidine 286 (proton acceptor) is an active-site residue.

This sequence belongs to the MINDY deubiquitinase family. FAM188 subfamily. Interacts with COPS5.

The protein resides in the nucleus. The catalysed reaction is Thiol-dependent hydrolysis of ester, thioester, amide, peptide and isopeptide bonds formed by the C-terminal Gly of ubiquitin (a 76-residue protein attached to proteins as an intracellular targeting signal).. In terms of biological role, hydrolase that can remove 'Lys-48'-linked conjugated ubiquitin from proteins. This chain is Ubiquitin carboxyl-terminal hydrolase MINDY-3, found in Mus musculus (Mouse).